The primary structure comprises 577 residues: 9-cis-epoxycarotenoid dioxygenase NCED6, chloroplastic (577 aa).

A disordered region spans residues 1-25; that stretch reads MQHSLRSDLLPTKTSPRSHLLPQPK. Fe cation is bound by residues histidine 276, histidine 325, histidine 390, and histidine 563.

This sequence belongs to the carotenoid oxygenase family. It depends on Fe(2+) as a cofactor. As to expression, expressed before fertilization in male and female gametophytes, and then immediately after pollination, restricted to seed endosperm.

The protein resides in the plastid. It is found in the chloroplast stroma. The catalysed reaction is a 9-cis-epoxycarotenoid + O2 = a 12'-apo-carotenal + 2-cis,4-trans-xanthoxin. The enzyme catalyses 9-cis-violaxanthin + O2 = (3S,5R,6S)-5,6-epoxy-3-hydroxy-5,6-dihydro-12'-apo-beta-caroten-12'-al + 2-cis,4-trans-xanthoxin. It carries out the reaction 9'-cis-neoxanthin + O2 = (3S,5R,6R)-3,5-dihydroxy-6,7-didehydro-5,6-dihydro-12'-apo-beta-caroten-12'-al + 2-cis,4-trans-xanthoxin. Functionally, has a 11,12(11',12') 9-cis epoxycarotenoid cleavage activity. Catalyzes the first step of abscisic-acid biosynthesis from carotenoids. Contributes probably to abscisic acid synthesis for the induction of seed dormancy. In Arabidopsis thaliana (Mouse-ear cress), this protein is 9-cis-epoxycarotenoid dioxygenase NCED6, chloroplastic (NCED6).